Here is a 360-residue protein sequence, read N- to C-terminus: Peptide chain release factor 1 (360 aa).

N5-methylglutamine is present on Gln-235.

This sequence belongs to the prokaryotic/mitochondrial release factor family. Methylated by PrmC. Methylation increases the termination efficiency of RF1.

It is found in the cytoplasm. In terms of biological role, peptide chain release factor 1 directs the termination of translation in response to the peptide chain termination codons UAG and UAA. The protein is Peptide chain release factor 1 of Mannheimia succiniciproducens (strain KCTC 0769BP / MBEL55E).